Consider the following 253-residue polypeptide: TasA anchoring/assembly protein (253 aa).

A signal peptide spans 1 to 32 (MFRLFHNQQKAKTKLKVLLIFQLSVIFSLTAA). The important for TasA fiber formation stretch occupies residues 50-57 (TFDVSLQT). Residues 190-241 (EKPTVPKKETKSDVKKENETTQKDIPEKTMKEETSQEAVTKEKETQSDQKES) are compositionally biased toward basic and acidic residues. A disordered region spans residues 190 to 253 (EKPTVPKKET…EDEKSNEADQ (64 aa)).

It localises to the secreted. The protein resides in the cell wall. In terms of biological role, required for biofilm formation. Required for the proper anchoring and polymerization of TasA amyloid fibers at the cell surface. Is also a minor component of TasA fibers. The sequence is that of TasA anchoring/assembly protein from Bacillus subtilis (strain 168).